The chain runs to 425 residues: Histidine--tRNA ligase 1 (425 aa).

Belongs to the class-II aminoacyl-tRNA synthetase family. Homodimer.

The protein resides in the cytoplasm. It catalyses the reaction tRNA(His) + L-histidine + ATP = L-histidyl-tRNA(His) + AMP + diphosphate + H(+). The sequence is that of Histidine--tRNA ligase 1 from Bacillus cereus (strain ZK / E33L).